The primary structure comprises 160 residues: uncharacterized protein (160 aa).

The chain crosses the membrane as a helical span at residues 47 to 67 (LLGGFANVAAILTPLVAVLAY).

It is found in the membrane. This is an uncharacterized protein from Sinorhizobium fredii (strain NBRC 101917 / NGR234).